The sequence spans 403 residues: MAAAAGEEVEAARWAEAEDERKEGLRRRRRYGLVEYRALPGYMRDNEYILRHYRCEWPLPQVLLSAFSIHNETLNVWTHLIGFFIFLVLTIYTATQVPNVVDLQSLQHLPDVLRNADLHKIQTELVACLPSLPHLSDLQKLKDELKSSWNSIEVLPSLSRWHLLELLSSCLPHRFTHSNETSLSVLQSMKEDIANMIAPQLIRPIPRWPFYAFLGGAMFCLLASSTCHLLSCHSRRLAYIMLRLDYAGIAALIATSFYPPVYYSFMCYPFFCNLYLSCITILGVATIAFSLLPVFQNPEFRTIRACLFFGMGASGVIPVIHKLILFWHQPEALHTTAYEVLMGLFYGIGALVYATRVPERWMPGKFDIAGHSHQLFHVLVVAGAYTHYHSGLVYLKWRDVQGC.

At 1–73 (MAAAAGEEVE…LSAFSIHNET (73 aa)) the chain is on the cytoplasmic side. The chain crosses the membrane as a helical span at residues 74-94 (LNVWTHLIGFFIFLVLTIYTA). Residues 95 to 209 (TQVPNVVDLQ…QLIRPIPRWP (115 aa)) are Extracellular-facing. Residues 210 to 230 (FYAFLGGAMFCLLASSTCHLL) form a helical membrane-spanning segment. Topologically, residues 231–246 (SCHSRRLAYIMLRLDY) are cytoplasmic. A helical transmembrane segment spans residues 247–267 (AGIAALIATSFYPPVYYSFMC). The Extracellular portion of the chain corresponds to 268 to 274 (YPFFCNL). A helical membrane pass occupies residues 275-295 (YLSCITILGVATIAFSLLPVF). The Cytoplasmic portion of the chain corresponds to 296–306 (QNPEFRTIRAC). Residues 307–327 (LFFGMGASGVIPVIHKLILFW) traverse the membrane as a helical segment. Topologically, residues 328-331 (HQPE) are extracellular. Residues 332–352 (ALHTTAYEVLMGLFYGIGALV) form a helical membrane-spanning segment. Residues 353–374 (YATRVPERWMPGKFDIAGHSHQ) are Cytoplasmic-facing. Residues 375-395 (LFHVLVVAGAYTHYHSGLVYL) traverse the membrane as a helical segment. Topologically, residues 396-403 (KWRDVQGC) are extracellular.

It belongs to the ADIPOR family.

The protein localises to the membrane. In terms of biological role, may play a role in abiotic stress response. This is Heptahelical transmembrane protein ADIPOR3 (ADIPOR3) from Oryza sativa subsp. japonica (Rice).